Reading from the N-terminus, the 60-residue chain is Large ribosomal subunit protein bL32 (60 aa).

Residues Met-1–Lys-21 form a disordered region. Over residues His-7 to Tyr-20 the composition is skewed to basic residues.

The protein belongs to the bacterial ribosomal protein bL32 family.

This Streptococcus thermophilus (strain ATCC BAA-250 / LMG 18311) protein is Large ribosomal subunit protein bL32.